The chain runs to 202 residues: NAD(P)H-quinone oxidoreductase chain 6 (202 aa).

Helical transmembrane passes span 9 to 29, 32 to 52, 61 to 81, 98 to 118, and 144 to 164; these read VVSFGILATMLIGTALGVVLA, IVYSAFLLGGVFISIAGMYLL, AQVLVYVGAVNVLILFAIMLV, VLTAIVSVGLFALLSTMVLAT, and FLLPFELASVLLLMAMVGAII.

It belongs to the complex I subunit 6 family.

Its subcellular location is the membrane. It carries out the reaction a plastoquinone + NADH + (n+1) H(+)(in) = a plastoquinol + NAD(+) + n H(+)(out). The catalysed reaction is a plastoquinone + NADPH + (n+1) H(+)(in) = a plastoquinol + NADP(+) + n H(+)(out). NDH-1 shuttles electrons from NAD(P)H, via FMN and iron-sulfur (Fe-S) centers, to quinones in the respiratory chain. The immediate electron acceptor for the enzyme in this species is believed to be plastoquinone. Couples the redox reaction to proton translocation (for every two electrons transferred, four hydrogen ions are translocated across the cytoplasmic membrane), and thus conserves the redox energy in a proton gradient. This Nostoc sp. (strain PCC 7120 / SAG 25.82 / UTEX 2576) protein is NAD(P)H-quinone oxidoreductase chain 6 (ndhG).